We begin with the raw amino-acid sequence, 507 residues long: ATP synthase subunit alpha, chloroplastic (507 aa).

170-177 (GDRQTGKT) contributes to the ATP binding site. Threonine 257 is modified (phosphothreonine).

Belongs to the ATPase alpha/beta chains family. F-type ATPases have 2 components, CF(1) - the catalytic core - and CF(0) - the membrane proton channel. CF(1) has five subunits: alpha(3), beta(3), gamma(1), delta(1), epsilon(1). CF(0) has four main subunits: a, b, b' and c.

It localises to the plastid. The protein resides in the chloroplast thylakoid membrane. The enzyme catalyses ATP + H2O + 4 H(+)(in) = ADP + phosphate + 5 H(+)(out). Functionally, produces ATP from ADP in the presence of a proton gradient across the membrane. The alpha chain is a regulatory subunit. The polypeptide is ATP synthase subunit alpha, chloroplastic (Draba nemorosa (Woodland whitlowgrass)).